The chain runs to 118 residues: Large ribosomal subunit protein bL12 (118 aa).

An N-acetylmethionine; in form MA2 modification is found at Met-1.

Belongs to the bacterial ribosomal protein bL12 family. As to quaternary structure, homodimer. Part of the ribosomal stalk of the 50S ribosomal subunit. Forms a multimeric L10(L12)X complex, where L10 forms an elongated spine to which 2 to 4 L12 dimers bind in a sequential fashion. Binds GTP-bound translation factors. In terms of processing, acetylation of Met-1 converts MA1 to MA2.

Its function is as follows. Forms part of the ribosomal stalk which helps the ribosome interact with GTP-bound translation factors. Is thus essential for accurate translation. The polypeptide is Large ribosomal subunit protein bL12 (Micrococcus luteus (Micrococcus lysodeikticus)).